Consider the following 154-residue polypeptide: Protein FAM162A (154 aa).

Positions 76–102 (RFKKEDEIPETVSLEMLDTAKNKMRVK) are required for proapoptotic activity. The helical transmembrane segment at 103–120 (ISYLMIALTVVGCICMVI) threads the bilayer.

The protein belongs to the UPF0389 family. Interacts with HSP90AB1; HSP90AB1 is essential for FAM162A mitochondrial localization and pro-apoptotic activity. Interacts with VDAC2; the interaction is probably involved in inducing mitochondrial permeability transition.

It is found in the mitochondrion membrane. Proposed to be involved in regulation of apoptosis; the exact mechanism may differ between cell types/tissues. May be involved in hypoxia-induced cell death of transformed cells implicating cytochrome C release and caspase activation (such as CASP9) and inducing mitochondrial permeability transition. May be involved in hypoxia-induced cell death of neuronal cells probably by promoting release of AIFM1 from mitochondria to cytoplasm and its translocation to the nucleus; however, the involvement of caspases has been reported conflictingly. The polypeptide is Protein FAM162A (FAM162A) (Pongo abelii (Sumatran orangutan)).